We begin with the raw amino-acid sequence, 336 residues long: Acyl-CoA-binding domain-containing protein 4 (336 aa).

A helical; Signal-anchor membrane pass occupies residues 12–32; the sequence is AVIGLLFAFLVAKLISTVIAF. A disordered region spans residues 40-88; the sequence is TRSTPTSPSAADTPAAPAPPPASLDGGHGDTSDGSGSDSDSDWEGVEST. The span at 42-54 shows a compositional bias: low complexity; the sequence is STPTSPSAADTPA. A compositionally biased stretch (acidic residues) spans 78–88; it reads SDSDWEGVEST. The 89-residue stretch at 90–178 folds into the ACB domain; that stretch reads LDEEFSAASA…VDELFPNWSM (89 aa). An acyl-CoA is bound by residues 120–124, lysine 142, lysine 146, and tyrosine 165; that span reads YGLYK. Asparagine 175 carries an N-linked (GlcNAc...) asparagine glycan. The disordered stretch occupies residues 179-202; sequence GSSTKRKDEDTTVSASSSKGPMGP. Residue asparagine 216 is glycosylated (N-linked (GlcNAc...) asparagine). 2 ANK repeats span residues 251–280 and 284–313; these read EGRT…DVNA and EGQT…DVQI.

Belongs to the ACBP family. As to expression, highly expressed in leaves. Expressed at low levels in roots and seeds.

The protein localises to the endoplasmic reticulum membrane. Binds medium- and long-chain acyl-CoA esters with high affinity. Can interact in vitro with palmitoyl-CoA, linoleoyl-CoA and linolenoyl-CoA. Binds phosphatidic acid (PA) and phosphatidylcholine (PC) in vitro. May play a role in the biosynthesis of phospholipids. This chain is Acyl-CoA-binding domain-containing protein 4, found in Oryza sativa subsp. japonica (Rice).